The chain runs to 361 residues: 5-formaminoimidazole-4-carboxamide-1-(beta)-D-ribofuranosyl 5'-monophosphate synthetase (361 aa).

5-amino-1-(5-phospho-beta-D-ribosyl)imidazole-4-carboxamide contacts are provided by His-27 and Ser-94. The ATP-grasp domain occupies 116–348 (RRILRWESER…MGQRIAREIK (233 aa)). ATP-binding positions include 156-166 (KFPGARGGRGY), 199-202 (EEYV), and Glu-230. Asn-258 contributes to the 5-amino-1-(5-phospho-beta-D-ribosyl)imidazole-4-carboxamide binding site. Residues Gln-297 and Glu-310 each coordinate Mg(2+).

Belongs to the phosphohexose mutase family. As to quaternary structure, homohexamer. Dimer of trimers. Requires Mg(2+) as cofactor. It depends on Mn(2+) as a cofactor.

It catalyses the reaction 5-amino-1-(5-phospho-beta-D-ribosyl)imidazole-4-carboxamide + formate + ATP = 5-formamido-1-(5-phospho-D-ribosyl)imidazole-4-carboxamide + ADP + phosphate. The protein operates within purine metabolism; IMP biosynthesis via de novo pathway; 5-formamido-1-(5-phospho-D-ribosyl)imidazole-4-carboxamide from 5-amino-1-(5-phospho-D-ribosyl)imidazole-4-carboxamide (formate route): step 1/1. Inhibited by ADP. Its function is as follows. Catalyzes the ATP- and formate-dependent formylation of 5-aminoimidazole-4-carboxamide-1-beta-d-ribofuranosyl 5'-monophosphate (AICAR) to 5-formaminoimidazole-4-carboxamide-1-beta-d-ribofuranosyl 5'-monophosphate (FAICAR) in the absence of folates. In Methanocaldococcus jannaschii (strain ATCC 43067 / DSM 2661 / JAL-1 / JCM 10045 / NBRC 100440) (Methanococcus jannaschii), this protein is 5-formaminoimidazole-4-carboxamide-1-(beta)-D-ribofuranosyl 5'-monophosphate synthetase.